Reading from the N-terminus, the 353-residue chain is Protein AC18 (353 aa).

Its subcellular location is the host nucleus. It localises to the host cytoplasm. Functionally, may play a role in occlusion-derived virions (ODV) formation and/or regulation of late viral gene expression. The protein is Protein AC18 (DA41) of Autographa californica nuclear polyhedrosis virus (AcMNPV).